The primary structure comprises 386 residues: Oxytocin receptor (386 aa).

Residues 1-31 are disordered; that stretch reads MEGVLAANWSAEAVNSSAAPPEAEGNRTAGP. Over 1-38 the chain is Extracellular; sequence MEGVLAANWSAEAVNSSAAPPEAEGNRTAGPPQRNEAL. N-linked (GlcNAc...) asparagine glycans are attached at residues N8, N15, and N26. Residues 39–63 traverse the membrane as a helical segment; it reads ARVEVAVLCLILFLALSGNACVLLA. At 64–74 the chain is on the cytoplasmic side; the sequence is LRTTRHKHSRL. Residues 75–97 traverse the membrane as a helical segment; that stretch reads FFFMKHLSIADLVVAVFQVLPQL. Residues 98–113 lie on the Extracellular side of the membrane; it reads LWDITFRFYGPDLLCR. Cysteines 112 and 187 form a disulfide. The helical transmembrane segment at 114–135 threads the bilayer; sequence LVKYLQVVGMFASTYLLLLMSL. Over 136–154 the chain is Cytoplasmic; sequence DRCLAICQPLRALRRPADR. Residues 155–175 traverse the membrane as a helical segment; sequence LAVLATWLGCLVASAPQVHIF. The Extracellular segment spans residues 176-202; sequence SLREVADGVFDCWAVFIQPWGPKAYIT. A helical transmembrane segment spans residues 203-225; that stretch reads WITLAVYIVPVIVLAACYGLISF. Over 226-277 the chain is Cytoplasmic; the sequence is KIWQNLRLKTAAEAAEAIAGTEGAAAGSRGRAALARVSSVKLISKAKIRTVK. A helical membrane pass occupies residues 278 to 296; the sequence is MTFIIVLAFIVCWTPFFFV. At 297-311 the chain is on the extracellular side; the sequence is QMWSVWDADAPKEAS. Residues 312–334 traverse the membrane as a helical segment; sequence AFIIAMLLASLNSCCNPWIYMLF. Topologically, residues 335–386 are cytoplasmic; the sequence is TGHLFHELVQRFLCCSSSHLKTSRPGETSVSKKSNSSTFVLSQHSSSQKSCS. Polar residues predominate over residues 355 to 375; that stretch reads KTSRPGETSVSKKSNSSTFVL. The disordered stretch occupies residues 355–386; sequence KTSRPGETSVSKKSNSSTFVLSQHSSSQKSCS. Residues S368 and S370 each carry the phosphoserine modification. A compositionally biased stretch (low complexity) spans 376 to 386; sequence SQHSSSQKSCS.

The protein belongs to the G-protein coupled receptor 1 family. Vasopressin/oxytocin receptor subfamily.

Its subcellular location is the cell membrane. Receptor for oxytocin. The activity of this receptor is mediated by G proteins which activate a phosphatidylinositol-calcium second messenger system. The sequence is that of Oxytocin receptor (OXTR) from Sus scrofa (Pig).